The chain runs to 416 residues: Protein sine oculis (416 aa).

Disordered regions lie at residues 32 to 91 (TGLS…SGGG) and 262 to 329 (VSNW…NNGL). Over residues 42–57 (NNNNNNSSTSNNNNST) the composition is skewed to low complexity. Over residues 79–91 (NGGGGGGVVSGGG) the composition is skewed to gly residues. Positions 218 to 277 (GEETSYCFKEKSRSVLRDWYSHNPYPSPREKRDLAEATGLTTTQVSNWFKNRRQRDRAAE) form a DNA-binding region, homeobox. A compositionally biased stretch (basic and acidic residues) spans 273-290 (DRAAEHKDGSTDKQHLDS). Residues 291–329 (SSDSEMEGSMLPSQSAQHQQQQQQQQHSPGNSSGNNNGL) are compositionally biased toward low complexity.

Belongs to the SIX/Sine oculis homeobox family. As to expression, in developing embryos, expressed in the eye disk epithelium, bolwig's organ and the optic lobe primordium at areas of invagination. In adults, present in photoreceptor cells in the apical regions of the retina, and in optic lobes.

It localises to the nucleus. In terms of biological role, required for visual system development. May transcriptionally regulate genes necessary for optic lobe invagination and Bolwig's nerve formation. The protein is Protein sine oculis (so) of Drosophila melanogaster (Fruit fly).